Here is an 823-residue protein sequence, read N- to C-terminus: Hypoxia-inducible factor 1-alpha (823 aa).

A disordered region spans residues 1 to 30 (MEGAGGANDKKKISSERRKEKSRDAARSRR). Residues 1-401 (MEGAGGANDK…KEPDALTLLA (401 aa)) are interaction with TSGA10. A compositionally biased stretch (basic and acidic residues) spans 8 to 30 (NDKKKISSERRKEKSRDAARSRR). Residues 17 to 70 (RRKEKSRDAARSRRSKESEVFYELAHQLPLPHNVSSHLDKASVMRLTISYLRVR) enclose the bHLH domain. Residues 21–30 (KSRDAARSRR) form a DNA-binding region. In terms of domain architecture, PAS 1 spans 85–158 (KAQMNCFYLK…THRNGLVKKG (74 aa)). Residues 170–191 (RMKCTLTSRGRTMNIKSATWKV) form a required for heterodimer formation with ARNT region. Residues 228–298 (PHPSNIEIPL…KTHHDMFTKG (71 aa)) form the PAS 2 domain. Position 247 is a phosphoserine; by CK1 (serine 247). The PAC domain maps to 302–345 (TGQYRMLAKRGGYVWIETQATVIYNTKNSQPQCIVCVNYVVSGI). The interval 401-600 (APAAGDTIIS…QSASTNTVFQ (200 aa)) is ODD. Position 402 is a 4-hydroxyproline (proline 402). The segment covering 494 to 517 (IQDQPASPSDGSTRQSSPEPNSPS) has biased composition (polar residues). The segment at 494 to 521 (IQDQPASPSDGSTRQSSPEPNSPSEYCF) is disordered. Residues 531–575 (FKLELVEKLFAEDTEAKNPFSTQDTDLDLEMLAPYIPMDDDFQLR) are NTAD. At lysine 532 the chain carries N6-acetyllysine; alternate. Lysine 532 is covalently cross-linked (Glycyl lysine isopeptide (Lys-Gly) (interchain with G-Cter in ubiquitin); alternate). Residues lysine 538 and lysine 547 each participate in a glycyl lysine isopeptide (Lys-Gly) (interchain with G-Cter in ubiquitin) cross-link. A Phosphoserine; by GSK3-beta modification is found at serine 551. At threonine 555 the chain carries Phosphothreonine; by GSK3-beta. The residue at position 564 (proline 564) is a 4-hydroxyproline. Serine 576 is subject to Phosphoserine; by PLK3. The interval 576 to 782 (SFDQLSPLEN…SDLACRLLGQ (207 aa)) is ID. 2 disordered regions span residues 581-602 (SPLENSSTSPQSASTNTVFQPT) and 639-685 (PSPP…PRSP). Phosphoserine; by GSK3-beta is present on serine 589. Residues 651-666 (ATTSPYSDTGSRTASP) show a composition bias toward polar residues. Serine 654 is subject to Phosphoserine; by PLK3. Lysine 706 is subject to N6-acetyllysine. Residues 715–721 (RKRKIEH) carry the Nuclear localization signal motif. A CTAD region spans residues 783–823 (SMDESGLPQLTSYDCEVNAPIQGSRNLLQGEELLRALDQVN). S-nitrosocysteine is present on cysteine 797. Asparagine 800 is subject to (3S)-3-hydroxyasparagine.

In terms of assembly, interacts with the ARNT; forms a heterodimer that binds core DNA sequence 5'-TACGTG-3' within the hypoxia response element (HRE) of target gene promoters. Interacts with COPS5; the interaction increases the transcriptional activity of HIF1A through increased stability. Interacts with EP300 (via TAZ-type 1 domains); the interaction is stimulated in response to hypoxia and inhibited by CITED2. Interacts with CREBBP (via TAZ-type 1 domains). Interacts with NCOA1, NCOA2, APEX1 and HSP90. Interacts (hydroxylated within the ODD domain) with VHLL (via beta domain); the interaction, leads to polyubiquitination and subsequent HIF1A proteasomal degradation. During hypoxia, sumoylated HIF1A also binds VHL; the interaction promotes the ubiquitination of HIF1A. Interacts with SENP1; the interaction desumoylates HIF1A resulting in stabilization and activation of transcription. Interacts (via the ODD domain) with NAA10; the interaction appears not to acetylate HIF1A nor have any affect on protein stability, during hypoxia. Interacts with RWDD3; the interaction enhances HIF1A sumoylation. Interacts with TSGA10. Interacts with HIF3A. Interacts with RORA (via the DNA binding domain); the interaction enhances HIF1A transcription under hypoxia through increasing protein stability. Interaction with PSMA7 inhibits the transactivation activity of HIF1A under both normoxic and hypoxia-mimicking conditions. Interacts with USP20. Interacts with RACK1; promotes HIF1A ubiquitination and proteasome-mediated degradation. Interacts (via N-terminus) with USP19. Interacts with SIRT2. Interacts (deacetylated form) with EGLN1. Interacts with CBFA2T3. Interacts with HSP90AA1 and HSP90AB1. Interacts with DCUN1D1; this interaction increases the interaction between VHL and DCUN1D1. Interacts with HIF1AN. In terms of processing, S-nitrosylation of Cys-797 may be responsible for increased recruitment of p300 coactivator necessary for transcriptional activity of HIF-1 complex. Acetylation of Lys-532 by ARD1 increases interaction with VHL and stimulates subsequent proteasomal degradation. Deacetylation of Lys-706 by SIRT2 increases its interaction with and hydroxylation by EGLN1 thereby inactivating HIF1A activity by inducing its proteasomal degradation. Post-translationally, ubiquitinated; in normoxia, following hydroxylation and interaction with VHL. Lys-532 appears to be the principal site of ubiquitination. Clioquinol, the Cu/Zn-chelator, inhibits ubiquitination through preventing hydroxylation at Asn-800. Ubiquitinated by E3 ligase VHL. Deubiquitinated by UCHL1. In terms of processing, requires phosphorylation for DNA-binding. Phosphorylation at Ser-247 by CSNK1D/CK1 represses kinase activity and impairs ARNT binding. Phosphorylation by GSK3-beta and PLK3 promote degradation by the proteasome. The iron and 2-oxoglutarate dependent 3-hydroxylation of asparagine is (S) stereospecific within HIF CTAD domains. Post-translationally, sumoylated; with SUMO1 under hypoxia. Sumoylation is enhanced through interaction with RWDD3. Both sumoylation and desumoylation seem to be involved in the regulation of its stability during hypoxia. Sumoylation can promote either its stabilization or its VHL-dependent degradation by promoting hydroxyproline-independent HIF1A-VHL complex binding, thus leading to HIF1A ubiquitination and proteasomal degradation. Desumoylation by SENP1 increases its stability amd transcriptional activity. There is a disaccord between various publications on the effect of sumoylation and desumoylation on its stability and transcriptional activity. In terms of processing, in normoxia, is hydroxylated on Pro-402 and Pro-564 in the oxygen-dependent degradation domain (ODD) by EGLN1/PHD2 and EGLN2/PHD1. EGLN3/PHD3 has also been shown to hydroxylate Pro-564. The hydroxylated prolines promote interaction with VHL, initiating rapid ubiquitination and subsequent proteasomal degradation. Deubiquitinated by USP20. Under hypoxia, proline hydroxylation is impaired and ubiquitination is attenuated, resulting in stabilization. In normoxia, is hydroxylated on Asn-800 by HIF1AN, thus abrogating interaction with CREBBP and EP300 and preventing transcriptional activation. Repressed by iron ion, via Fe(2+) prolyl hydroxylase (PHD) enzymes-mediated hydroxylation and subsequent proteasomal degradation.

It localises to the cytoplasm. The protein localises to the nucleus. Its activity is regulated as follows. Induced by reactive oxygen species (ROS). Functions as a master transcriptional regulator of the adaptive response to hypoxia. Under hypoxic conditions, activates the transcription of over 40 genes, including erythropoietin, glucose transporters, glycolytic enzymes, vascular endothelial growth factor, HILPDA, and other genes whose protein products increase oxygen delivery or facilitate metabolic adaptation to hypoxia. Plays an essential role in embryonic vascularization, tumor angiogenesis and pathophysiology of ischemic disease. Heterodimerizes with ARNT; heterodimer binds to core DNA sequence 5'-TACGTG-3' within the hypoxia response element (HRE) of target gene promoters. Activation requires recruitment of transcriptional coactivators such as CREBBP and EP300. Activity is enhanced by interaction with NCOA1 and/or NCOA2. Interaction with redox regulatory protein APEX1 seems to activate CTAD and potentiates activation by NCOA1 and CREBBP. Involved in the axonal distribution and transport of mitochondria in neurons during hypoxia. In Bos taurus (Bovine), this protein is Hypoxia-inducible factor 1-alpha (HIF1A).